The following is a 500-amino-acid chain: Probable glycine dehydrogenase (decarboxylating) subunit 2 (500 aa).

A disordered region spans residues 1–25 (MLIFEHSRPGRRNYSQSPKAAEATD). Lys263 carries the post-translational modification N6-(pyridoxal phosphate)lysine.

This sequence belongs to the GcvP family. C-terminal subunit subfamily. As to quaternary structure, the glycine cleavage system is composed of four proteins: P, T, L and H. In this organism, the P 'protein' is a heterodimer of two subunits. The cofactor is pyridoxal 5'-phosphate.

It carries out the reaction N(6)-[(R)-lipoyl]-L-lysyl-[glycine-cleavage complex H protein] + glycine + H(+) = N(6)-[(R)-S(8)-aminomethyldihydrolipoyl]-L-lysyl-[glycine-cleavage complex H protein] + CO2. In terms of biological role, the glycine cleavage system catalyzes the degradation of glycine. The P protein binds the alpha-amino group of glycine through its pyridoxal phosphate cofactor; CO(2) is released and the remaining methylamine moiety is then transferred to the lipoamide cofactor of the H protein. The polypeptide is Probable glycine dehydrogenase (decarboxylating) subunit 2 (Nitrosospira multiformis (strain ATCC 25196 / NCIMB 11849 / C 71)).